Reading from the N-terminus, the 178-residue chain is Prion-like protein doppel (178 aa).

The first 25 residues, 1–25 (MRKHLGGCWLAIVCILLFSQLCSVK), serve as a signal peptide directing secretion. The tract at residues 27-50 (RGIKHRIKWNRKVLPSTSQVTEAR) is flexible tail. The globular stretch occupies residues 51–154 (TAEIRPGAFI…KHCDFWLERG (104 aa)). Disulfide bonds link Cys94–Cys147 and Cys108–Cys142. Asn98 and Asn110 each carry an N-linked (GlcNAc...) asparagine glycan. The tract at residues 124-141 (KQDNKLYQRVLWQLIREL) is cu(2+) binding. Gly154 carries GPI-anchor amidated glycine lipidation. A propeptide spans 155 to 178 (AGLRVTLDQPMMLCLLVFIWFIVK) (removed in mature form).

The protein belongs to the prion family. Post-translationally, N-glycosylated. In terms of processing, O-glycosylated. In terms of tissue distribution, strongly expressed in testis. Detected at low levels in ovary, spleen, kidney and mammary gland.

Its subcellular location is the cell membrane. Functionally, required for normal acrosome reaction and for normal male fertility. Can bind Cu(2+). This is Prion-like protein doppel (PRND) from Bos taurus (Bovine).